The primary structure comprises 346 residues: Aspartate-semialdehyde dehydrogenase (346 aa).

Residues 10–13 (TGQG) and 38–39 (RS) contribute to the NADP(+) site. Arg98 provides a ligand contact to phosphate. Cys131 serves as the catalytic Acyl-thioester intermediate. Gln158 serves as a coordination point for substrate. 161–162 (SG) provides a ligand contact to NADP(+). Residue Lys228 coordinates phosphate. Arg250 lines the substrate pocket. His257 serves as the catalytic Proton acceptor. Asn326 contributes to the NADP(+) binding site.

Belongs to the aspartate-semialdehyde dehydrogenase family. As to quaternary structure, homodimer.

It carries out the reaction L-aspartate 4-semialdehyde + phosphate + NADP(+) = 4-phospho-L-aspartate + NADPH + H(+). It participates in amino-acid biosynthesis; L-lysine biosynthesis via DAP pathway; (S)-tetrahydrodipicolinate from L-aspartate: step 2/4. Its pathway is amino-acid biosynthesis; L-methionine biosynthesis via de novo pathway; L-homoserine from L-aspartate: step 2/3. The protein operates within amino-acid biosynthesis; L-threonine biosynthesis; L-threonine from L-aspartate: step 2/5. Functionally, catalyzes the NADPH-dependent formation of L-aspartate-semialdehyde (L-ASA) by the reductive dephosphorylation of L-aspartyl-4-phosphate. This is Aspartate-semialdehyde dehydrogenase from Mycolicibacterium smegmatis (Mycobacterium smegmatis).